The sequence spans 105 residues: Nitrogen fixation nifHD region GlnB-like protein 1 (105 aa).

Belongs to the P(II) protein family.

Functionally, could be involved in the regulation of nitrogen fixation. The sequence is that of Nitrogen fixation nifHD region GlnB-like protein 1 (glnBA) from Methanothermobacter marburgensis (strain ATCC BAA-927 / DSM 2133 / JCM 14651 / NBRC 100331 / OCM 82 / Marburg) (Methanobacterium thermoautotrophicum).